A 63-amino-acid polypeptide reads, in one-letter code: Alpha-conotoxin-like PuSG1.1 (63 aa).

Residues 1–21 (MRCLAFLVVTLLLFTATATTG) form the signal peptide. Residues 22–43 (ASNGMNAAASGEAPDSISLAVR) constitute a propeptide that is removed on maturation. Disulfide bonds link Cys-46-Cys-52 and Cys-47-Cys-60. Positions 48–50 (PDP) are lacks the Ser-Xaa-Pro motif that is crucial for potent interaction with nAChR.

It belongs to the conotoxin A superfamily. Expressed by the salivary gland.

The protein resides in the secreted. In terms of biological role, alpha-conopeptides-like may act on postsynaptic membranes, they bind to the nicotinic acetylcholine receptors (nAChR) and thus inhibit them. Has possibly a distinct nAChR binding mode from other alpha-conotoxins, due to a different three residue motif (lacks the Ser-Xaa-Pro motif). In Conus pulicarius (Flea-bitten cone), this protein is Alpha-conotoxin-like PuSG1.1.